Reading from the N-terminus, the 397-residue chain is Keratinocyte differentiation factor 1 (397 aa).

Pro residues predominate over residues 1 to 16 (MPRPGQPRPSSGPPRL). Disordered regions lie at residues 1 to 67 (MPRP…SAEP), 124 to 158 (EAAW…MGSS), and 191 to 214 (PLAD…RGSE). Positions 44–55 (RPDPKDPGHHGP) are enriched in basic and acidic residues. A compositionally biased stretch (polar residues) spans 201 to 211 (SLPSTFTSSPR). Ser218 carries the phosphoserine modification. Disordered regions lie at residues 304-339 (ISTR…TMVG) and 361-392 (ARKL…GAPL). Low complexity predominate over residues 321–330 (ARSTAPAAAP). A compositionally biased stretch (polar residues) spans 375–388 (SQDSSFQGTDTDSS).

Its subcellular location is the cytoplasm. The protein localises to the cell junction. Functionally, plays a role in the regulation of the epidermis formation during early development. Required both as an inhibitor of basal cell proliferation and a promoter of differentiation of basal progenitor cell progeny. The polypeptide is Keratinocyte differentiation factor 1 (Kdf1) (Rattus norvegicus (Rat)).